The chain runs to 123 residues: uncharacterized protein (123 aa).

The chain crosses the membrane as a helical span at residues 34–53; it reads LPFFFLFLGNLGKFFFLWPL.

The protein resides in the membrane. This is an uncharacterized protein from Saccharomyces cerevisiae (strain ATCC 204508 / S288c) (Baker's yeast).